Reading from the N-terminus, the 426-residue chain is Serine--tRNA ligase (426 aa).

The tract at residues 37-63 (RKSVQTRTEQLQAERNARSKSIGQAKA) is disordered. L-serine is bound at residue 233 to 235 (TAE). 264-266 (RSE) provides a ligand contact to ATP. Glutamate 287 lines the L-serine pocket. 351 to 354 (EISS) serves as a coordination point for ATP. An L-serine-binding site is contributed by serine 387.

The protein belongs to the class-II aminoacyl-tRNA synthetase family. Type-1 seryl-tRNA synthetase subfamily. Homodimer. The tRNA molecule binds across the dimer.

The protein localises to the cytoplasm. It carries out the reaction tRNA(Ser) + L-serine + ATP = L-seryl-tRNA(Ser) + AMP + diphosphate + H(+). It catalyses the reaction tRNA(Sec) + L-serine + ATP = L-seryl-tRNA(Sec) + AMP + diphosphate + H(+). Its pathway is aminoacyl-tRNA biosynthesis; selenocysteinyl-tRNA(Sec) biosynthesis; L-seryl-tRNA(Sec) from L-serine and tRNA(Sec): step 1/1. Its function is as follows. Catalyzes the attachment of serine to tRNA(Ser). Is also able to aminoacylate tRNA(Sec) with serine, to form the misacylated tRNA L-seryl-tRNA(Sec), which will be further converted into selenocysteinyl-tRNA(Sec). The chain is Serine--tRNA ligase from Pseudomonas entomophila (strain L48).